The chain runs to 575 residues: Arginine--tRNA ligase (575 aa).

Positions 122–132 (PNVAKEMHVGH) match the 'HIGH' region motif.

Belongs to the class-I aminoacyl-tRNA synthetase family. As to quaternary structure, monomer.

It localises to the cytoplasm. It catalyses the reaction tRNA(Arg) + L-arginine + ATP = L-arginyl-tRNA(Arg) + AMP + diphosphate. This Actinobacillus succinogenes (strain ATCC 55618 / DSM 22257 / CCUG 43843 / 130Z) protein is Arginine--tRNA ligase.